An 81-amino-acid chain; its full sequence is uncharacterized protein (81 aa).

Belongs to the ycf70 family.

It is found in the plastid. It localises to the chloroplast. This is an uncharacterized protein from Saccharum officinarum (Sugarcane).